The primary structure comprises 460 residues: Probable argininosuccinate lyase (460 aa).

Residues serine 26, asparagine 114, and threonine 159 each contribute to the 2-(N(omega)-L-arginino)succinate site. The Proton acceptor role is filled by histidine 160. Residue serine 281 is the Proton donor of the active site. Residues asparagine 289, tyrosine 321, glutamine 326, and lysine 329 each contribute to the 2-(N(omega)-L-arginino)succinate site.

Belongs to the lyase 1 family. Argininosuccinate lyase subfamily. As to quaternary structure, homotetramer.

The enzyme catalyses 2-(N(omega)-L-arginino)succinate = fumarate + L-arginine. It functions in the pathway amino-acid biosynthesis; L-arginine biosynthesis; L-arginine from L-ornithine and carbamoyl phosphate: step 3/3. The polypeptide is Probable argininosuccinate lyase (argx) (Schizosaccharomyces pombe (strain 972 / ATCC 24843) (Fission yeast)).